The following is a 501-amino-acid chain: Endonuclease domain-containing 1 protein (501 aa).

An N-terminal signal peptide occupies residues 1-21; that stretch reads MGCARWLALGGLLALAGLLQA. At Lys408 the chain carries N6-acetyllysine.

The protein belongs to the DNA/RNA non-specific endonuclease family. In terms of assembly, interacts with RNF26; this interaction is important to modulate innate immune signaling through the cGAS-STING pathway.

Its subcellular location is the secreted. In terms of biological role, may act as a DNase and a RNase. Plays a role in the modulation of innate immune signaling through the cGAS-STING pathway by interacting with RNF26. The chain is Endonuclease domain-containing 1 protein (Endod1) from Mus musculus (Mouse).